A 512-amino-acid chain; its full sequence is Probable DNA ligase (512 aa).

Glu-208 lines the ATP pocket. The active-site N6-AMP-lysine intermediate is the Lys-210. The ATP site is built by Arg-215, Arg-230, Glu-259, Phe-299, Arg-374, and Lys-380.

Belongs to the ATP-dependent DNA ligase family. Mg(2+) is required as a cofactor.

The enzyme catalyses ATP + (deoxyribonucleotide)n-3'-hydroxyl + 5'-phospho-(deoxyribonucleotide)m = (deoxyribonucleotide)n+m + AMP + diphosphate.. Its function is as follows. DNA ligase that seals nicks in double-stranded DNA during DNA replication, DNA recombination and DNA repair. The chain is Probable DNA ligase from Streptomyces coelicolor (strain ATCC BAA-471 / A3(2) / M145).